Reading from the N-terminus, the 504-residue chain is Cytochrome P450 monooxygenase braC (504 aa).

A helical transmembrane segment spans residues 4–24; it reads LYLPTIWASTLTAATIFIVAV. Residue cysteine 448 coordinates heme.

It belongs to the cytochrome P450 family. It depends on heme as a cofactor.

It is found in the membrane. Its pathway is secondary metabolite biosynthesis. In terms of biological role, cytochrome P450 monooxygenase; part of the gene cluster that mediates the biosynthesis of the brasilane terpene glycosides brasilane D and E. The biosynthesis starts with the activity of the terpene cyclase braA that converts farnesyl pyrophosphate into the sesquiterpene alcohol trichobrasilenol. Subsequently, trichobrasilenol is glycosylated by the O-glycosyltransferase braB putatively using UDP-GlcNAc as sugar donor to yield brasilane A. The latter then undergoes two rounds of oxidation performed by the cytochrome P450 monooxygenase braC. In the first round braC hydroxylates C-12 forming brasilane D, which serves as substrate in the second round to establish the epoxide at the bond between C-5 and C-10 and oxidize the alcohol at C-12 to an aldehyde leading to the final product brasilane E. This is Cytochrome P450 monooxygenase braC from Annulohypoxylon truncatum (Hypoxylon truncatum).